The sequence spans 1117 residues: Protocadherin-11 X-linked (1117 aa).

Residues 1–23 form the signal peptide; it reads MDLLSGTHIFAVLLACIVFQSGA. Residues 24 to 812 lie on the Extracellular side of the membrane; sequence QEKNYTIREE…ASSPSSDYVK (789 aa). N-linked (GlcNAc...) asparagine glycans are attached at residues Asn-27 and Asn-48. Cadherin domains are found at residues 27-139, 140-249, 250-355, 362-466, 467-570, 571-673, and 677-795; these read NYTI…APLF, PATV…RPVF, KENE…IPSI, NPIN…APVF, TQPF…SPVF, THNE…KPVF, and SSNY…TPVT. N-linked (GlcNAc...) asparagine glycosylation occurs at Asn-344. N-linked (GlcNAc...) asparagine glycosylation occurs at Asn-553. The helical transmembrane segment at 813 to 833 threads the bilayer; sequence IVVAIVAGTITVILVIFITAV. At 834-1117 the chain is on the cytoplasmic side; sequence VRCQQSPHLK…DGNSDPESGK (284 aa). Polar residues predominate over residues 1029–1039; that stretch reads TVEIWTHPQPQ. Positions 1029–1117 are disordered; the sequence is TVEIWTHPQP…DGNSDPESGK (89 aa).

In terms of tissue distribution, expressed in adrenal gland, brain, heart, kidney, lung, prostate, skeletal muscle, testis and thymus.

It localises to the cell membrane. Functionally, potential calcium-dependent cell-adhesion protein. This Sus scrofa (Pig) protein is Protocadherin-11 X-linked (PCDH11X).